We begin with the raw amino-acid sequence, 329 residues long: UDP-2,3-diacylglucosamine pyrophosphatase LpxG (329 aa).

A helical transmembrane segment spans residues 2–24 (FVFVGSTVSLTAIVAAPVLTWIW). Positions 59, 61, 91, 123, 257, and 259 each coordinate a divalent metal cation.

This sequence belongs to the metallophosphoesterase superfamily. Mn(2+) is required as a cofactor.

It is found in the cell inner membrane. It carries out the reaction UDP-2,3-diacyl-alpha-D-glucosamine + H2O = 2,3-diacyl-alpha-D-glucosaminyl 1-phosphate + UMP + 2 H(+). The protein operates within glycolipid biosynthesis; lipid IV(A) biosynthesis. Hydrolyzes the pyrophosphate bond of UDP-2,3-diacylglucosamine to form 2,3-diacylglucosamine 1-phosphate (lipid X) and UMP by catalyzing the attack of water at the alpha-P atom. Involved in the biosynthesis of lipid A, a phosphorylated glycolipid that anchors the lipooligosaccharide (LOS) to the outer membrane of the cell. This chain is UDP-2,3-diacylglucosamine pyrophosphatase LpxG, found in Chlamydia muridarum (strain MoPn / Nigg).